A 300-amino-acid polypeptide reads, in one-letter code: Acetylglutamate kinase (300 aa).

Residues 72–73, Arg-94, and Asn-197 each bind substrate; that span reads GG.

This sequence belongs to the acetylglutamate kinase family. ArgB subfamily.

Its subcellular location is the cytoplasm. The enzyme catalyses N-acetyl-L-glutamate + ATP = N-acetyl-L-glutamyl 5-phosphate + ADP. It participates in amino-acid biosynthesis; L-arginine biosynthesis; N(2)-acetyl-L-ornithine from L-glutamate: step 2/4. Its function is as follows. Catalyzes the ATP-dependent phosphorylation of N-acetyl-L-glutamate. This chain is Acetylglutamate kinase, found in Aromatoleum aromaticum (strain DSM 19018 / LMG 30748 / EbN1) (Azoarcus sp. (strain EbN1)).